The following is a 250-amino-acid chain: tRNA pseudouridine synthase A (250 aa).

Asp-52 acts as the Nucleophile in catalysis. Tyr-111 provides a ligand contact to substrate.

It belongs to the tRNA pseudouridine synthase TruA family. Homodimer.

The catalysed reaction is uridine(38/39/40) in tRNA = pseudouridine(38/39/40) in tRNA. Its function is as follows. Formation of pseudouridine at positions 38, 39 and 40 in the anticodon stem and loop of transfer RNAs. This Methylorubrum extorquens (strain CM4 / NCIMB 13688) (Methylobacterium extorquens) protein is tRNA pseudouridine synthase A.